The sequence spans 141 residues: ATP synthase epsilon chain (141 aa).

Belongs to the ATPase epsilon chain family. In terms of assembly, F-type ATPases have 2 components, CF(1) - the catalytic core - and CF(0) - the membrane proton channel. CF(1) has five subunits: alpha(3), beta(3), gamma(1), delta(1), epsilon(1). CF(0) has three main subunits: a, b and c.

The protein localises to the cell membrane. Produces ATP from ADP in the presence of a proton gradient across the membrane. The sequence is that of ATP synthase epsilon chain from Lactococcus lactis subsp. lactis (strain IL1403) (Streptococcus lactis).